A 91-amino-acid chain; its full sequence is Progonadoliberin-1 (91 aa).

An N-terminal signal peptide occupies residues 1–21 (MVVKTWMPWLLVSSVLSQGCC). Residue Gln22 is modified to Pyrrolidone carboxylic acid. At Gly31 the chain carries Glycine amide.

The protein belongs to the GnRH family. Expressed in the cell bodies of a cluster of neurons in the preoptic region.

The protein localises to the secreted. Stimulates the secretion of gonadotropins. The sequence is that of Progonadoliberin-1 (gnrh1) from Oryzias latipes (Japanese rice fish).